The primary structure comprises 417 residues: NADH-quinone oxidoreductase subunit D (417 aa).

It belongs to the complex I 49 kDa subunit family. NDH-1 is composed of 14 different subunits. Subunits NuoB, C, D, E, F, and G constitute the peripheral sector of the complex.

Its subcellular location is the cell inner membrane. The enzyme catalyses a quinone + NADH + 5 H(+)(in) = a quinol + NAD(+) + 4 H(+)(out). In terms of biological role, NDH-1 shuttles electrons from NADH, via FMN and iron-sulfur (Fe-S) centers, to quinones in the respiratory chain. The immediate electron acceptor for the enzyme in this species is believed to be ubiquinone. Couples the redox reaction to proton translocation (for every two electrons transferred, four hydrogen ions are translocated across the cytoplasmic membrane), and thus conserves the redox energy in a proton gradient. The sequence is that of NADH-quinone oxidoreductase subunit D from Cupriavidus necator (strain ATCC 17699 / DSM 428 / KCTC 22496 / NCIMB 10442 / H16 / Stanier 337) (Ralstonia eutropha).